The chain runs to 203 residues: Holliday junction branch migration complex subunit RuvA (203 aa).

Positions methionine 1–valine 63 are domain I. The segment at aspartate 64–alanine 141 is domain II. The tract at residues alanine 141 to alanine 145 is flexible linker. A domain III region spans residues valine 146–arginine 203.

The protein belongs to the RuvA family. Homotetramer. Forms an RuvA(8)-RuvB(12)-Holliday junction (HJ) complex. HJ DNA is sandwiched between 2 RuvA tetramers; dsDNA enters through RuvA and exits via RuvB. An RuvB hexamer assembles on each DNA strand where it exits the tetramer. Each RuvB hexamer is contacted by two RuvA subunits (via domain III) on 2 adjacent RuvB subunits; this complex drives branch migration. In the full resolvosome a probable DNA-RuvA(4)-RuvB(12)-RuvC(2) complex forms which resolves the HJ.

It localises to the cytoplasm. Its function is as follows. The RuvA-RuvB-RuvC complex processes Holliday junction (HJ) DNA during genetic recombination and DNA repair, while the RuvA-RuvB complex plays an important role in the rescue of blocked DNA replication forks via replication fork reversal (RFR). RuvA specifically binds to HJ cruciform DNA, conferring on it an open structure. The RuvB hexamer acts as an ATP-dependent pump, pulling dsDNA into and through the RuvAB complex. HJ branch migration allows RuvC to scan DNA until it finds its consensus sequence, where it cleaves and resolves the cruciform DNA. In Streptomyces avermitilis (strain ATCC 31267 / DSM 46492 / JCM 5070 / NBRC 14893 / NCIMB 12804 / NRRL 8165 / MA-4680), this protein is Holliday junction branch migration complex subunit RuvA.